We begin with the raw amino-acid sequence, 62 residues long: Photosystem II reaction center protein Z (62 aa).

2 helical membrane-spanning segments follow: residues 8–28 (TLFA…VVFA) and 41–61 (FSGI…NSFV).

This sequence belongs to the PsbZ family. PSII is composed of 1 copy each of membrane proteins PsbA, PsbB, PsbC, PsbD, PsbE, PsbF, PsbH, PsbI, PsbJ, PsbK, PsbL, PsbM, PsbT, PsbY, PsbZ, Psb30/Ycf12, at least 3 peripheral proteins of the oxygen-evolving complex and a large number of cofactors. It forms dimeric complexes.

It localises to the plastid. The protein localises to the chloroplast thylakoid membrane. Functionally, may control the interaction of photosystem II (PSII) cores with the light-harvesting antenna, regulates electron flow through the 2 photosystem reaction centers. PSII is a light-driven water plastoquinone oxidoreductase, using light energy to abstract electrons from H(2)O, generating a proton gradient subsequently used for ATP formation. The sequence is that of Photosystem II reaction center protein Z from Tupiella akineta (Green alga).